The following is a 56-amino-acid chain: Small ribosomal subunit protein uS14 (56 aa).

Zn(2+) contacts are provided by cysteine 21, cysteine 24, cysteine 39, and cysteine 42.

Belongs to the universal ribosomal protein uS14 family. In terms of assembly, component of the 40S small ribosomal subunit. The cofactor is Zn(2+).

It is found in the cytoplasm. It localises to the cytosol. The protein resides in the rough endoplasmic reticulum. In terms of biological role, component of the small ribosomal subunit. The ribosome is a large ribonucleoprotein complex responsible for the synthesis of proteins in the cell. The protein is Small ribosomal subunit protein uS14 (rps29) of Hippocampus comes (Tiger tail seahorse).